The primary structure comprises 458 residues: GTPase Der (458 aa).

EngA-type G domains are found at residues 4 to 169 (PSIA…PKDF) and 178 to 353 (VMMS…TQHR). Residues 10 to 17 (GRPNVGKS), 57 to 61 (DTGGL), 120 to 123 (NKCE), 184 to 191 (GRPNVGKS), 231 to 235 (DTAGI), and 296 to 299 (NKWD) each bind GTP. In terms of domain architecture, KH-like spans 354-439 (MRVTTSVVNE…PIILLWRGKQ (86 aa)).

Belongs to the TRAFAC class TrmE-Era-EngA-EngB-Septin-like GTPase superfamily. EngA (Der) GTPase family. In terms of assembly, associates with the 50S ribosomal subunit.

GTPase that plays an essential role in the late steps of ribosome biogenesis. This chain is GTPase Der, found in Prochlorococcus marinus (strain MIT 9515).